Reading from the N-terminus, the 359-residue chain is Phosphoserine aminotransferase (359 aa).

Residues S9 and R42 each coordinate L-glutamate. Residues 76-77, W102, T152, D171, and Q194 contribute to the pyridoxal 5'-phosphate site; that span reads AS. The residue at position 195 (K195) is an N6-(pyridoxal phosphate)lysine. 236 to 237 contacts pyridoxal 5'-phosphate; the sequence is NT.

Belongs to the class-V pyridoxal-phosphate-dependent aminotransferase family. SerC subfamily. Homodimer. It depends on pyridoxal 5'-phosphate as a cofactor.

The protein resides in the cytoplasm. It catalyses the reaction O-phospho-L-serine + 2-oxoglutarate = 3-phosphooxypyruvate + L-glutamate. The enzyme catalyses 4-(phosphooxy)-L-threonine + 2-oxoglutarate = (R)-3-hydroxy-2-oxo-4-phosphooxybutanoate + L-glutamate. The protein operates within amino-acid biosynthesis; L-serine biosynthesis; L-serine from 3-phospho-D-glycerate: step 2/3. It participates in cofactor biosynthesis; pyridoxine 5'-phosphate biosynthesis; pyridoxine 5'-phosphate from D-erythrose 4-phosphate: step 3/5. Its function is as follows. Catalyzes the reversible conversion of 3-phosphohydroxypyruvate to phosphoserine and of 3-hydroxy-2-oxo-4-phosphonooxybutanoate to phosphohydroxythreonine. This Marinomonas sp. (strain MWYL1) protein is Phosphoserine aminotransferase.